We begin with the raw amino-acid sequence, 102 residues long: Large ribosomal subunit protein bL21 (102 aa).

It belongs to the bacterial ribosomal protein bL21 family. As to quaternary structure, part of the 50S ribosomal subunit. Contacts protein L20.

Functionally, this protein binds to 23S rRNA in the presence of protein L20. This Phytoplasma australiense protein is Large ribosomal subunit protein bL21.